Consider the following 86-residue polypeptide: Neuropeptide-like 3 (86 aa).

The N-terminal stretch at 1 to 16 (MFKLCVFVALLSLAAA) is a signal peptide. Propeptides lie at residues 17–50 (APAP…VAPQ) and 63–75 (AITQ…LLIK). The residue at position 85 (isoleucine 85) is an Isoleucine amide.

It is found in the secreted. This is Neuropeptide-like 3 (Nplp3) from Drosophila yakuba (Fruit fly).